The primary structure comprises 355 residues: Biotin synthase (355 aa).

In terms of domain architecture, Radical SAM core spans 51 to 275 (NTVKVNYLVN…VCPDKEIRIA (225 aa)). Residues Cys-66, Cys-70, and Cys-73 each contribute to the [4Fe-4S] cluster site. [2Fe-2S] cluster contacts are provided by Cys-110, Cys-143, Cys-203, and Arg-273.

Belongs to the radical SAM superfamily. Biotin synthase family. As to quaternary structure, homodimer. The cofactor is [4Fe-4S] cluster. [2Fe-2S] cluster serves as cofactor.

It carries out the reaction (4R,5S)-dethiobiotin + (sulfur carrier)-SH + 2 reduced [2Fe-2S]-[ferredoxin] + 2 S-adenosyl-L-methionine = (sulfur carrier)-H + biotin + 2 5'-deoxyadenosine + 2 L-methionine + 2 oxidized [2Fe-2S]-[ferredoxin]. It participates in cofactor biosynthesis; biotin biosynthesis; biotin from 7,8-diaminononanoate: step 2/2. Catalyzes the conversion of dethiobiotin (DTB) to biotin by the insertion of a sulfur atom into dethiobiotin via a radical-based mechanism. This is Biotin synthase from Saccharopolyspora erythraea (strain ATCC 11635 / DSM 40517 / JCM 4748 / NBRC 13426 / NCIMB 8594 / NRRL 2338).